The following is a 155-amino-acid chain: RNA pyrophosphohydrolase (155 aa).

The Nudix hydrolase domain maps to Gly-6–Thr-148. A Nudix box motif is present at residues Gly-38–Gly-59.

The protein belongs to the Nudix hydrolase family. RppH subfamily. The cofactor is a divalent metal cation.

Functionally, accelerates the degradation of transcripts by removing pyrophosphate from the 5'-end of triphosphorylated RNA, leading to a more labile monophosphorylated state that can stimulate subsequent ribonuclease cleavage. The protein is RNA pyrophosphohydrolase of Francisella tularensis subsp. tularensis (strain FSC 198).